Here is a 662-residue protein sequence, read N- to C-terminus: Serine/threonine-protein kinase PTK1/STK1 (662 aa).

A disordered region spans residues 35 to 119 (GNKLKKKASL…SSTSRNLSNS (85 aa)). Residues 50 to 60 (STSTNDSESSS) show a composition bias toward low complexity. 2 stretches are compositionally biased toward polar residues: residues 61–91 (PKLP…SAST) and 98–119 (GSST…LSNS). The 308-residue stretch at 196–503 (DDENKTIGWG…IDDLFEDPWF (308 aa)) folds into the Protein kinase domain. ATP-binding positions include 202–210 (IGWGGSCEV) and lysine 226. Aspartate 329 functions as the Proton acceptor in the catalytic mechanism. The disordered stretch occupies residues 605–631 (TLTLSEEPPATPAPSAPSAPSARVRGH).

It belongs to the protein kinase superfamily. Ser/Thr protein kinase family.

The enzyme catalyses L-seryl-[protein] + ATP = O-phospho-L-seryl-[protein] + ADP + H(+). It catalyses the reaction L-threonyl-[protein] + ATP = O-phospho-L-threonyl-[protein] + ADP + H(+). Functionally, essential determinant for low-affinity spermidine transport. The sequence is that of Serine/threonine-protein kinase PTK1/STK1 (PTK1) from Saccharomyces cerevisiae (strain ATCC 204508 / S288c) (Baker's yeast).